Consider the following 342-residue polypeptide: Biotin synthase (342 aa).

In terms of domain architecture, Radical SAM core spans 63-288 (PEVEVEGIIS…RTMLRFAGGR (226 aa)). [4Fe-4S] cluster contacts are provided by Cys-78, Cys-82, and Cys-85. Residues Cys-121, Cys-154, Cys-213, and Arg-283 each contribute to the [2Fe-2S] cluster site.

Belongs to the radical SAM superfamily. Biotin synthase family. As to quaternary structure, homodimer. The cofactor is [4Fe-4S] cluster. Requires [2Fe-2S] cluster as cofactor.

The catalysed reaction is (4R,5S)-dethiobiotin + (sulfur carrier)-SH + 2 reduced [2Fe-2S]-[ferredoxin] + 2 S-adenosyl-L-methionine = (sulfur carrier)-H + biotin + 2 5'-deoxyadenosine + 2 L-methionine + 2 oxidized [2Fe-2S]-[ferredoxin]. It functions in the pathway cofactor biosynthesis; biotin biosynthesis; biotin from 7,8-diaminononanoate: step 2/2. Functionally, catalyzes the conversion of dethiobiotin (DTB) to biotin by the insertion of a sulfur atom into dethiobiotin via a radical-based mechanism. The protein is Biotin synthase of Mycobacteroides abscessus (strain ATCC 19977 / DSM 44196 / CCUG 20993 / CIP 104536 / JCM 13569 / NCTC 13031 / TMC 1543 / L948) (Mycobacterium abscessus).